A 164-amino-acid polypeptide reads, in one-letter code: ATP synthase subunit b (164 aa).

The helical transmembrane segment at 10–32 threads the bilayer; that stretch reads SAAMLMLFVLMVYFLNKFLYTPF.

The protein belongs to the ATPase B chain family. F-type ATPases have 2 components, F(1) - the catalytic core - and F(0) - the membrane proton channel. F(1) has five subunits: alpha(3), beta(3), gamma(1), delta(1), epsilon(1). F(0) has three main subunits: a(1), b(2) and c(10-14). The alpha and beta chains form an alternating ring which encloses part of the gamma chain. F(1) is attached to F(0) by a central stalk formed by the gamma and epsilon chains, while a peripheral stalk is formed by the delta and b chains.

It is found in the cell inner membrane. In terms of biological role, f(1)F(0) ATP synthase produces ATP from ADP in the presence of a proton or sodium gradient. F-type ATPases consist of two structural domains, F(1) containing the extramembraneous catalytic core and F(0) containing the membrane proton channel, linked together by a central stalk and a peripheral stalk. During catalysis, ATP synthesis in the catalytic domain of F(1) is coupled via a rotary mechanism of the central stalk subunits to proton translocation. Component of the F(0) channel, it forms part of the peripheral stalk, linking F(1) to F(0). The polypeptide is ATP synthase subunit b (Thermotoga maritima (strain ATCC 43589 / DSM 3109 / JCM 10099 / NBRC 100826 / MSB8)).